Consider the following 233-residue polypeptide: Biosynthetic peptidoglycan transglycosylase (233 aa).

A helical transmembrane segment spans residues 17 to 37 (IVLAVLALVILPYALIFFYVL).

This sequence belongs to the glycosyltransferase 51 family.

Its subcellular location is the cell inner membrane. The catalysed reaction is [GlcNAc-(1-&gt;4)-Mur2Ac(oyl-L-Ala-gamma-D-Glu-L-Lys-D-Ala-D-Ala)](n)-di-trans,octa-cis-undecaprenyl diphosphate + beta-D-GlcNAc-(1-&gt;4)-Mur2Ac(oyl-L-Ala-gamma-D-Glu-L-Lys-D-Ala-D-Ala)-di-trans,octa-cis-undecaprenyl diphosphate = [GlcNAc-(1-&gt;4)-Mur2Ac(oyl-L-Ala-gamma-D-Glu-L-Lys-D-Ala-D-Ala)](n+1)-di-trans,octa-cis-undecaprenyl diphosphate + di-trans,octa-cis-undecaprenyl diphosphate + H(+). It functions in the pathway cell wall biogenesis; peptidoglycan biosynthesis. Peptidoglycan polymerase that catalyzes glycan chain elongation from lipid-linked precursors. In Rhizobium leguminosarum bv. trifolii (strain WSM2304), this protein is Biosynthetic peptidoglycan transglycosylase.